We begin with the raw amino-acid sequence, 209 residues long: GTP cyclohydrolase 1 (209 aa).

Residues Cys89, His92, and Cys163 each coordinate Zn(2+).

The protein belongs to the GTP cyclohydrolase I family. Toroid-shaped homodecamer, composed of two pentamers of five dimers.

It catalyses the reaction GTP + H2O = 7,8-dihydroneopterin 3'-triphosphate + formate + H(+). Its pathway is cofactor biosynthesis; 7,8-dihydroneopterin triphosphate biosynthesis; 7,8-dihydroneopterin triphosphate from GTP: step 1/1. The polypeptide is GTP cyclohydrolase 1 (Sulfolobus acidocaldarius (strain ATCC 33909 / DSM 639 / JCM 8929 / NBRC 15157 / NCIMB 11770)).